The following is a 417-amino-acid chain: Serine hydroxymethyltransferase (417 aa).

(6S)-5,6,7,8-tetrahydrofolate-binding positions include L121 and 125–127 (GHL). K229 carries the post-translational modification N6-(pyridoxal phosphate)lysine. 355–357 (SPF) is a binding site for (6S)-5,6,7,8-tetrahydrofolate.

Belongs to the SHMT family. Homodimer. It depends on pyridoxal 5'-phosphate as a cofactor.

The protein localises to the cytoplasm. The enzyme catalyses (6R)-5,10-methylene-5,6,7,8-tetrahydrofolate + glycine + H2O = (6S)-5,6,7,8-tetrahydrofolate + L-serine. It functions in the pathway one-carbon metabolism; tetrahydrofolate interconversion. Its pathway is amino-acid biosynthesis; glycine biosynthesis; glycine from L-serine: step 1/1. Catalyzes the reversible interconversion of serine and glycine with tetrahydrofolate (THF) serving as the one-carbon carrier. This reaction serves as the major source of one-carbon groups required for the biosynthesis of purines, thymidylate, methionine, and other important biomolecules. Also exhibits THF-independent aldolase activity toward beta-hydroxyamino acids, producing glycine and aldehydes, via a retro-aldol mechanism. The polypeptide is Serine hydroxymethyltransferase (Photorhabdus laumondii subsp. laumondii (strain DSM 15139 / CIP 105565 / TT01) (Photorhabdus luminescens subsp. laumondii)).